A 465-amino-acid polypeptide reads, in one-letter code: Glutamate--tRNA ligase 2 (465 aa).

Residues 8–18 (PSPTGLMHLGN) carry the 'HIGH' region motif. The 'KMSKS' region signature appears at 249-253 (PLSKR). Position 252 (lysine 252) interacts with ATP.

This sequence belongs to the class-I aminoacyl-tRNA synthetase family. Glutamate--tRNA ligase type 1 subfamily. In terms of assembly, monomer.

It localises to the cytoplasm. The enzyme catalyses tRNA(Glu) + L-glutamate + ATP = L-glutamyl-tRNA(Glu) + AMP + diphosphate. Functionally, catalyzes the attachment of glutamate to tRNA(Glu) in a two-step reaction: glutamate is first activated by ATP to form Glu-AMP and then transferred to the acceptor end of tRNA(Glu). The sequence is that of Glutamate--tRNA ligase 2 from Coxiella burnetii (strain CbuK_Q154) (Coxiella burnetii (strain Q154)).